Consider the following 502-residue polypeptide: Facilitated trehalose transporter Tret1 (502 aa).

Over 1-38 (MGVENTKQTMSSQNIKPAKDSDDVLHTQFKEVKRSPMR) the chain is Cytoplasmic. Residues 39–59 (YTMQLLAALAVSMASLMIGYS) form a helical membrane-spanning segment. The Extracellular portion of the chain corresponds to 60–83 (SSYTSPALVSMRDNTTATFEVTMD). N-linked (GlcNAc...) asparagine glycosylation occurs at Asn-73. The chain crosses the membrane as a helical span at residues 84–104 (MAMWIGSIMPLSALIGGIIGG). Residues 105–120 (PCIEYIGRRNTILSTA) are Cytoplasmic-facing. The chain crosses the membrane as a helical span at residues 121 to 141 (LPFLAGWLFIALATNVAMILV). Topologically, residues 142–144 (GRS) are extracellular. Residues 145–165 (ICGFCVGVASLSLPVYLGESI) form a helical membrane-spanning segment. Topologically, residues 166 to 172 (QPEVRGS) are cytoplasmic. A helical transmembrane segment spans residues 173-193 (LGLLPTVFGNSGILMCFTAGM). Residues 194–199 (YLAWRN) are Extracellular-facing. A helical transmembrane segment spans residues 200–220 (LALLGACIPIIFLILMFLIPE). Topologically, residues 221 to 282 (TPRWYISKGK…ELFRKNHIKP (62 aa)) are cytoplasmic. The chain crosses the membrane as a helical span at residues 283–303 (VFISLGLMFFQQFSGINAVIF). The Extracellular segment spans residues 304–319 (YTVQIFKDSGSTVDEN). An N-linked (GlcNAc...) asparagine glycan is attached at Asn-319. The chain crosses the membrane as a helical span at residues 320-340 (LSTIIVGLVNFISTFVAAMII). At 341-346 (DRLGRK) the chain is on the cytoplasmic side. The helical transmembrane segment at 347–367 (MLLYISSILMCITLFTFGTFF) threads the bilayer. At 368–376 (YVKELMDVT) the chain is on the extracellular side. The helical transmembrane segment at 377–397 (AFGWIPLMSLIVYVIGFSFGF) threads the bilayer. At 398–410 (GPIPWLMMGEILP) the chain is on the cytoplasmic side. Residues 411 to 433 (VKIRGTAASVATAFNWSCTFVVT) form a helical membrane-spanning segment. The Extracellular segment spans residues 434–446 (KTYEDLVLHIGPY). A helical membrane pass occupies residues 447–467 (GTFWLFGTLVAVAFIFVIICV). The Cytoplasmic segment spans residues 468 to 502 (PETRGRSLEEIERRFAGPVRRTSAIANLKPMPITI).

Belongs to the major facilitator superfamily. Sugar transporter (TC 2.A.1.1) family. Trehalose transporter subfamily.

The protein localises to the cell membrane. Its function is as follows. Moderate-capacity facilitative transporter for trehalose. Does not transport maltose, sucrose or lactose. Mediates the bidirectional transfer of trehalose. Responsible for the transport of trehalose synthesized in the fat body and the incorporation of trehalose into other tissues that require a carbon source, thereby regulating trehalose levels in the hemolymph. This chain is Facilitated trehalose transporter Tret1, found in Apis mellifera ligustica (Common honeybee).